A 140-amino-acid chain; its full sequence is Large ribosomal subunit protein uL14 (140 aa).

Belongs to the universal ribosomal protein uL14 family. As to quaternary structure, part of the 50S ribosomal subunit. Forms a cluster with proteins L3 and L24e, part of which may contact the 16S rRNA in 2 intersubunit bridges.

Functionally, binds to 23S rRNA. Forms part of two intersubunit bridges in the 70S ribosome. In Staphylothermus marinus (strain ATCC 43588 / DSM 3639 / JCM 9404 / F1), this protein is Large ribosomal subunit protein uL14.